Consider the following 703-residue polypeptide: Pentatricopeptide repeat-containing protein At1g22830 (703 aa).

15 PPR repeats span residues Val-82–Phe-116, Asp-117–Leu-147, His-148–Ala-182, Asp-183–Cys-217, Asn-218–Arg-248, Asp-249–Ala-283, Ser-284–Ile-318, Gly-319–Ser-353, Ile-356–Asn-386, Ser-387–Pro-421, Asn-422–Arg-452, Cys-458–Arg-488, Asp-489–Pro-523, Asp-524–Val-554, and Arg-560–Ala-594. The interval Met-595–Asp-671 is type E motif. The interval Asp-671 to Gly-703 is disordered.

Belongs to the PPR family. PCMP-E subfamily.

The chain is Pentatricopeptide repeat-containing protein At1g22830 (PCMP-E24) from Arabidopsis thaliana (Mouse-ear cress).